Reading from the N-terminus, the 430-residue chain is Multisubstrate adapter protein soc-1 (430 aa).

Residues 7 to 133 (NIILEGSLKR…WVNEICKLCK (127 aa)) form the PH domain. Residues 192–222 (SHNSLPSNPNYNNLPDPLESSRSETSSMYSS) are compositionally biased toward low complexity. Disordered stretches follow at residues 192–246 (SHNS…TRHT), 275–303 (EDAE…SEGF), and 315–377 (RRAP…RNLD). The span at 341–369 (RNLSRNGVNENGNYSATFSSRTSNYQQSE) shows a compositional bias: polar residues.

Interacts (via C-terminus) with sem-5 (probably via SH3 domain 2). Interacts with nicotinic acetylcholine receptor. In terms of processing, may be phosphorylated.

In terms of biological role, adapter protein which modulates signaling mediated by several receptor tyrosine kinases. Plays a role in fluid homeostasis, probably downstream of receptor egl-15 and upstream of let-60/Ras. Involved in nicotinic acetylcholine receptor (nAChR)-mediated sensitivity to nicotine and levamisole and gamma-aminobutyric acid (GABA)receptor-mediated sensitivity to muscimol. Regulates synaptic levels of nAchR receptor subunit lev-1 and unc-38, and GABA receptor subunit unc-49 in the nerve cord, probably downstream of egl-15. Regulates motility. During the formation of neuromuscular junctions at the larval stage, down-regulates membrane protrusion from body wall muscles, probably downstream of egl-15. Promotes vulva induction and down-regulates fertility, probably downstream of receptor let-23. Down-regulates daf-2-mediated repression of dauer formation and positively regulates daf-2-mediated aging. May be involved in the recruitment of phosphatase ptp-2 to egl-15. In Caenorhabditis elegans, this protein is Multisubstrate adapter protein soc-1.